A 467-amino-acid polypeptide reads, in one-letter code: A-type ATP synthase subunit B (467 aa).

The disordered stretch occupies residues Gly95–Val114.

It belongs to the ATPase alpha/beta chains family. In terms of assembly, has multiple subunits with at least A(3), B(3), C, D, E, F, H, I and proteolipid K(x).

It is found in the cell membrane. Component of the A-type ATP synthase that produces ATP from ADP in the presence of a proton gradient across the membrane. The B chain is a regulatory subunit. This Pyrobaculum islandicum (strain DSM 4184 / JCM 9189 / GEO3) protein is A-type ATP synthase subunit B.